We begin with the raw amino-acid sequence, 450 residues long: tRNA modification GTPase MnmE (450 aa).

(6S)-5-formyl-5,6,7,8-tetrahydrofolate-binding residues include R23, E79, and K118. The region spanning 214-374 (GITLILVGKP…LKEHILNKVG (161 aa)) is the TrmE-type G domain. N224 provides a ligand contact to K(+). Residues 224 to 229 (NAGKSS), 243 to 249 (TSIAGTT), and 268 to 271 (DTAG) contribute to the GTP site. S228 lines the Mg(2+) pocket. The K(+) site is built by T243, I245, and T248. T249 is a Mg(2+) binding site. Position 450 (K450) interacts with (6S)-5-formyl-5,6,7,8-tetrahydrofolate.

This sequence belongs to the TRAFAC class TrmE-Era-EngA-EngB-Septin-like GTPase superfamily. TrmE GTPase family. As to quaternary structure, homodimer. Heterotetramer of two MnmE and two MnmG subunits. The cofactor is K(+).

It is found in the cytoplasm. Its function is as follows. Exhibits a very high intrinsic GTPase hydrolysis rate. Involved in the addition of a carboxymethylaminomethyl (cmnm) group at the wobble position (U34) of certain tRNAs, forming tRNA-cmnm(5)s(2)U34. In Francisella tularensis subsp. novicida (strain U112), this protein is tRNA modification GTPase MnmE.